Here is a 195-residue protein sequence, read N- to C-terminus: HTH-type transcriptional regulator BetI (195 aa).

The region spanning Pro8–Leu68 is the HTH tetR-type domain. Residues Ser31–Phe50 constitute a DNA-binding region (H-T-H motif).

It functions in the pathway amine and polyamine biosynthesis; betaine biosynthesis via choline pathway [regulation]. In terms of biological role, repressor involved in the biosynthesis of the osmoprotectant glycine betaine. It represses transcription of the choline transporter BetT and the genes of BetAB involved in the synthesis of glycine betaine. This is HTH-type transcriptional regulator BetI from Pectobacterium carotovorum subsp. carotovorum (strain PC1).